The following is a 1204-amino-acid chain: Erythroid differentiation-related factor 1 (1204 aa).

Disordered regions lie at residues 1–30 (MGDA…QAES), 220–264 (QPVS…ASSQ), 483–527 (PKKE…SDDS), and 586–613 (KKES…RGGP). Low complexity-rich tracts occupy residues 9 to 30 (AEGP…QAES), 223 to 241 (SSTT…NDSE), and 253 to 263 (SSVSEDPSASS). The span at 496–513 (NSDESYSEEEEEMPDSDE) shows a compositional bias: acidic residues. 2 TPR repeats span residues 693 to 726 (CCLC…QNAN) and 920 to 953 (DIHP…LSRK).

Its subcellular location is the nucleus. Functionally, transcription factor involved in erythroid differentiation. Involved in transcriptional activation of the globin gene. This is Erythroid differentiation-related factor 1 (EDRF1) from Pongo abelii (Sumatran orangutan).